Reading from the N-terminus, the 561-residue chain is Glucose-6-phosphate isomerase (561 aa).

The active-site Proton donor is Glu-366. Active-site residues include His-397 and Lys-525.

The protein belongs to the GPI family.

It is found in the cytoplasm. The enzyme catalyses alpha-D-glucose 6-phosphate = beta-D-fructose 6-phosphate. The protein operates within carbohydrate degradation; glycolysis; D-glyceraldehyde 3-phosphate and glycerone phosphate from D-glucose: step 2/4. In Dictyostelium discoideum (Social amoeba), this protein is Glucose-6-phosphate isomerase (gpi).